A 677-amino-acid polypeptide reads, in one-letter code: Zinc finger protein 526 (677 aa).

3 C2H2-type zinc fingers span residues 57–79 (FMCS…QEQH), 109–131 (FQCG…QDAH), and 141–164 (YQCG…KAQH). Positions 167–190 (TAAAKPPVPPPLPPVTPPPPPPAP) are disordered. Pro residues predominate over residues 172 to 190 (PPVPPPLPPVTPPPPPPAP). The segment at 198–220 (YECPECSTLCTTPEEFLEHQGTH) adopts a C2H2-type 4 zinc-finger fold. Positions 223–232 (SLEKEEHNGL) are enriched in basic and acidic residues. Residues 223-300 (SLEKEEHNGL…RRASHGPASA (78 aa)) form a disordered region. Positions 233 to 257 (EEEEEDDEDDNEETEEEEEAAAEVG) are enriched in acidic residues. 4 consecutive C2H2-type zinc fingers follow at residues 304–326 (FYCS…GRAH), 331–353 (HECT…LRLH), 359–381 (YLCV…RRAH), and 387–408 (HRCR…RRTH). Residues 408 to 449 (HAGKSGAPPSAAPPTVASAVASLAPAEPTPPPPAPPTPPAQL) are disordered. Low complexity predominate over residues 410–433 (GKSGAPPSAAPPTVASAVASLAPA). Residues 434–449 (EPTPPPPAPPTPPAQL) show a composition bias toward pro residues. 5 consecutive C2H2-type zinc fingers follow at residues 449–472 (LPCP…RAVH), 479–501 (HRCG…LRTH), 507–529 (FQCH…QLTH), 535–557 (YQCL…RRLH), and 580–602 (YYCG…QRVH). The disordered stretch occupies residues 608-627 (LTLQPPRSPPPAPPPPPEPQ). Positions 613-626 (PRSPPPAPPPPPEP) are enriched in pro residues.

It belongs to the krueppel C2H2-type zinc-finger protein family.

It is found in the nucleus. Its function is as follows. May be involved in transcriptional regulation. The polypeptide is Zinc finger protein 526 (ZNF526) (Bos taurus (Bovine)).